Here is a 662-residue protein sequence, read N- to C-terminus: Polyunsaturated fatty acid (12S)/(13S)-lipoxygenase, epidermal-type (662 aa).

Positions 2–114 constitute a PLAT domain; that stretch reads VKYKILVATG…TICLTEGTAL (113 aa). The 548-residue stretch at 115-662 folds into the Lipoxygenase domain; sequence KVTDDTQNLF…PSLVENSVTI (548 aa). Positions 360, 365, 540, and 662 each coordinate Fe cation.

It belongs to the lipoxygenase family. It depends on Fe cation as a cofactor. In terms of tissue distribution, expressed in epidermis.

It localises to the cytoplasm. The enzyme catalyses (5Z,8Z,11Z,14Z)-eicosatetraenoate + O2 = (12S)-hydroperoxy-(5Z,8Z,10E,14Z)-eicosatetraenoate. The catalysed reaction is 1-O-methyl-(9Z,12Z)-octadecadienoate + O2 = 1-O-methyl-(13S)-hydroperoxy-(9Z,11E)-octadecadienoate. It catalyses the reaction (8Z,11Z,14Z)-eicosatrienoate + O2 = (12S)-hydroperoxy-(8Z,10E,14Z)-eicosatrienoate. It carries out the reaction (5Z,8Z,11Z)-eicosatrienoate + O2 = (12S)-hydroperoxy-(5Z,8Z,10E)-eicosatrienoate. The enzyme catalyses 1-O-methyl-(5Z,8Z,11Z,14Z)-eicosatetraenoate + O2 = 1-O-methyl-(12S)-hydroperoxy-(5Z,8Z,10E,14Z)-eicosatetraenoate. The catalysed reaction is (9Z,12Z)-octadecadienoate + O2 = (13S)-hydroperoxy-(9Z,11E)-octadecadienoate. It catalyses the reaction (4Z,7Z,10Z,13Z,16Z,19Z)-docosahexaenoate + O2 = (14S)-hydroperoxy-(4Z,7Z,10Z,12E,16Z,19Z)-docosahexaenoate. The protein operates within lipid metabolism; hydroperoxy eicosatetraenoic acid biosynthesis. Arachidonate 12-lipoxygenase activity is decreased when the pH decreases from 7.4 to 6.0. Catalyzes the regio and stereo-specific incorporation of a single molecule of dioxygen into free and esterified polyunsaturated fatty acids generating lipid hydroperoxides that can be further reduced to the corresponding hydroxy species. Shows increasing catalytic activity within the series arachidonic acid &lt; 5,8,11-eicosatrienoic acid &lt; linoleic acid &lt; 8,11,14-eicosatrienoic acid. The chain is Polyunsaturated fatty acid (12S)/(13S)-lipoxygenase, epidermal-type from Mus musculus (Mouse).